The following is a 357-amino-acid chain: ATP-dependent 6-phosphofructokinase 2 (357 aa).

Residues G12, 80-81 (KG), and 107-110 (GDGS) each bind ATP. Position 108 (D108) interacts with Mg(2+). Substrate contacts are provided by residues 131–133 (TID), R168, 175–177 (MGR), E229, R272, and 278–281 (HIQR). Residue D133 is the Proton acceptor of the active site.

This sequence belongs to the phosphofructokinase type A (PFKA) family. Mixed-substrate PFK group III subfamily. In terms of assembly, homodimer or homotetramer. Requires Mg(2+) as cofactor.

The protein resides in the cytoplasm. It catalyses the reaction beta-D-fructose 6-phosphate + ATP = beta-D-fructose 1,6-bisphosphate + ADP + H(+). It participates in carbohydrate degradation; glycolysis; D-glyceraldehyde 3-phosphate and glycerone phosphate from D-glucose: step 3/4. Its activity is regulated as follows. Subject to allosteric activation by ADP and other diphosphonucleosides, and inhibition by phosphoenolpyruvate. In terms of biological role, catalyzes the phosphorylation of D-fructose 6-phosphate to fructose 1,6-bisphosphate by ATP, the first committing step of glycolysis. The protein is ATP-dependent 6-phosphofructokinase 2 of Nostoc sp. (strain PCC 7120 / SAG 25.82 / UTEX 2576).